Reading from the N-terminus, the 387-residue chain is Monomeric sarcosine oxidase (387 aa).

FAD is bound at residue 6–36; that stretch reads DVIVVGAGSMGMAAGYYLAKQGVKTLLVDSF. Cys316 carries the S-8alpha-FAD cysteine modification.

Belongs to the MSOX/MTOX family. MSOX subfamily. As to quaternary structure, monomer. It depends on FAD as a cofactor.

It is found in the cytoplasm. The enzyme catalyses sarcosine + O2 + H2O = formaldehyde + glycine + H2O2. In terms of biological role, catalyzes the oxidative demethylation of sarcosine. The chain is Monomeric sarcosine oxidase (soxA) from Bacillus sp. (strain NS-129).